The primary structure comprises 934 residues: Serine/threonine-protein kinase PknD (934 aa).

The 293-residue stretch at 4 to 296 (YELIRLIGKG…ELRQALQPYL (293 aa)) folds into the Protein kinase domain. Residues 10-18 (IGKGGMGEV) and Lys-33 contribute to the ATP site. Asp-138 acts as the Proton acceptor in catalysis.

Belongs to the protein kinase superfamily. Ser/Thr protein kinase family. Interacts with Pkn1. Autophosphorylated on serine and threonine residues. Present in elementary bodies 40 hours post-infection as 2 bands of approximately 55 to 60 and 45 to 50 kDa, which may be due to differential phosphorylation as well as degradation; an enzymatically active full-length protein can also be detected.

The enzyme catalyses L-seryl-[protein] + ATP = O-phospho-L-seryl-[protein] + ADP + H(+). It carries out the reaction L-threonyl-[protein] + ATP = O-phospho-L-threonyl-[protein] + ADP + H(+). Functionally, together with the serine/threonine kinase Pkn1, may play a role in the specific interactions with host proteins during intracellular growth. Autophosphorylates and also phosphorylates Pkn1. The sequence is that of Serine/threonine-protein kinase PknD from Chlamydia trachomatis serovar L2 (strain ATCC VR-902B / DSM 19102 / 434/Bu).